A 471-amino-acid chain; its full sequence is Adenosylhomocysteinase (471 aa).

Residues threonine 60, aspartate 135, and glutamate 196 each contribute to the substrate site. Residue 197–199 (TTT) coordinates NAD(+). The substrate site is built by lysine 226 and aspartate 230. Residues asparagine 231, 260–265 (GYGDVG), glutamate 283, asparagine 318, 339–341 (IGH), and asparagine 387 contribute to the NAD(+) site.

It belongs to the adenosylhomocysteinase family. NAD(+) serves as cofactor.

Its subcellular location is the cytoplasm. The catalysed reaction is S-adenosyl-L-homocysteine + H2O = L-homocysteine + adenosine. Its pathway is amino-acid biosynthesis; L-homocysteine biosynthesis; L-homocysteine from S-adenosyl-L-homocysteine: step 1/1. In terms of biological role, may play a key role in the regulation of the intracellular concentration of adenosylhomocysteine. The protein is Adenosylhomocysteinase of Chlorobium limicola (strain DSM 245 / NBRC 103803 / 6330).